The chain runs to 69 residues: DNA gyrase inhibitor YacG (69 aa).

Residues cysteine 7, cysteine 10, cysteine 26, and cysteine 30 each coordinate Zn(2+).

Belongs to the DNA gyrase inhibitor YacG family. As to quaternary structure, interacts with GyrB. Zn(2+) is required as a cofactor.

Functionally, inhibits all the catalytic activities of DNA gyrase by preventing its interaction with DNA. Acts by binding directly to the C-terminal domain of GyrB, which probably disrupts DNA binding by the gyrase. The chain is DNA gyrase inhibitor YacG from Shewanella putrefaciens (strain CN-32 / ATCC BAA-453).